Here is a 530-residue protein sequence, read N- to C-terminus: Bifunctional purine biosynthesis protein PurH (530 aa).

In terms of domain architecture, MGS-like spans 1–148 (MNNARPIRRA…KNHKDVTIVV (148 aa)).

The protein belongs to the PurH family.

It carries out the reaction (6R)-10-formyltetrahydrofolate + 5-amino-1-(5-phospho-beta-D-ribosyl)imidazole-4-carboxamide = 5-formamido-1-(5-phospho-D-ribosyl)imidazole-4-carboxamide + (6S)-5,6,7,8-tetrahydrofolate. It catalyses the reaction IMP + H2O = 5-formamido-1-(5-phospho-D-ribosyl)imidazole-4-carboxamide. The protein operates within purine metabolism; IMP biosynthesis via de novo pathway; 5-formamido-1-(5-phospho-D-ribosyl)imidazole-4-carboxamide from 5-amino-1-(5-phospho-D-ribosyl)imidazole-4-carboxamide (10-formyl THF route): step 1/1. It participates in purine metabolism; IMP biosynthesis via de novo pathway; IMP from 5-formamido-1-(5-phospho-D-ribosyl)imidazole-4-carboxamide: step 1/1. The chain is Bifunctional purine biosynthesis protein PurH from Vibrio campbellii (strain ATCC BAA-1116).